A 424-amino-acid polypeptide reads, in one-letter code: Glutamyl-tRNA reductase (424 aa).

Substrate-binding positions include 50–53, serine 98, 103–105, and glutamine 109; these read TCNR and EDQ. Cysteine 51 serves as the catalytic Nucleophile. Position 178 to 183 (178 to 183) interacts with NADP(+); the sequence is GSGEMG.

The protein belongs to the glutamyl-tRNA reductase family. Homodimer.

It carries out the reaction (S)-4-amino-5-oxopentanoate + tRNA(Glu) + NADP(+) = L-glutamyl-tRNA(Glu) + NADPH + H(+). The protein operates within porphyrin-containing compound metabolism; protoporphyrin-IX biosynthesis; 5-aminolevulinate from L-glutamyl-tRNA(Glu): step 1/2. In terms of biological role, catalyzes the NADPH-dependent reduction of glutamyl-tRNA(Glu) to glutamate 1-semialdehyde (GSA). The protein is Glutamyl-tRNA reductase of Methanoregula boonei (strain DSM 21154 / JCM 14090 / 6A8).